Consider the following 328-residue polypeptide: Malate dehydrogenase (328 aa).

12–18 provides a ligand contact to NAD(+); that stretch reads GAAGQIA. Residues R93 and R99 each contribute to the substrate site. NAD(+) is bound by residues N106, Q113, and 130–132; that span reads VGN. Substrate is bound by residues N132 and R163. Residue H188 is the Proton acceptor of the active site.

Belongs to the LDH/MDH superfamily. MDH type 2 family.

It catalyses the reaction (S)-malate + NAD(+) = oxaloacetate + NADH + H(+). Functionally, catalyzes the reversible oxidation of malate to oxaloacetate. The polypeptide is Malate dehydrogenase (Burkholderia lata (strain ATCC 17760 / DSM 23089 / LMG 22485 / NCIMB 9086 / R18194 / 383)).